The sequence spans 274 residues: MAIVKCKPTSPGRRGVVKIVNSDLHKGKPFAGLLAKKSKTGGRNNTGRITTRHVGGGHKQHYRLIDFKRNKDGIPGKIERLEYDPNRTANIALVLYADGERRYILAAKGMQAGDKVVSGIDADIKVGNALPLRNIPVGSVVHAVEMKPGKGAQIARSAGAYVQVVARDGEYATLRLRSGEMRKVPVDCRATLGEVGNAEHMLRQLGKAGAKRWRGVRPTVRGVAMNPVDHPHGGGEGRTSGGRHPVTPWGVPTKGYKTRSNKRTDKYIVRRRTK.

The disordered stretch occupies residues 223 to 274 (VAMNPVDHPHGGGEGRTSGGRHPVTPWGVPTKGYKTRSNKRTDKYIVRRRTK).

It belongs to the universal ribosomal protein uL2 family. In terms of assembly, part of the 50S ribosomal subunit. Forms a bridge to the 30S subunit in the 70S ribosome.

In terms of biological role, one of the primary rRNA binding proteins. Required for association of the 30S and 50S subunits to form the 70S ribosome, for tRNA binding and peptide bond formation. It has been suggested to have peptidyltransferase activity; this is somewhat controversial. Makes several contacts with the 16S rRNA in the 70S ribosome. The polypeptide is Large ribosomal subunit protein uL2 (Shewanella amazonensis (strain ATCC BAA-1098 / SB2B)).